The primary structure comprises 195 residues: Thymidine kinase (195 aa).

Residues 15–22 (GSMFSGKS) and 88–91 (DEVQ) contribute to the ATP site. Glutamate 89 acts as the Proton acceptor in catalysis. Phenylalanine 120 provides a ligand contact to substrate. 2 residues coordinate Zn(2+): cysteine 145 and cysteine 148. Substrate-binding positions include 170–174 (IILVG) and tyrosine 179. Zn(2+)-binding residues include cysteine 183 and cysteine 186.

Belongs to the thymidine kinase family. Homotetramer.

It is found in the cytoplasm. It carries out the reaction thymidine + ATP = dTMP + ADP + H(+). This chain is Thymidine kinase, found in Bacillus cereus (strain ATCC 14579 / DSM 31 / CCUG 7414 / JCM 2152 / NBRC 15305 / NCIMB 9373 / NCTC 2599 / NRRL B-3711).